A 156-amino-acid chain; its full sequence is Ribosome maturation factor RimP (156 aa).

Belongs to the RimP family.

It is found in the cytoplasm. In terms of biological role, required for maturation of 30S ribosomal subunits. The sequence is that of Ribosome maturation factor RimP from Prochlorococcus marinus (strain NATL1A).